The following is a 459-amino-acid chain: MALNDKSIPHETKVVVLLIPFPAQGHLNQFLHLSRLIVAQNIPVHYVGTVTHIRQATLRYNNPTSNIHFHAFQVPPFVSPPPNPEDDFPSHLIPSFEASAHLREPVGKLLQSLSSQAKRVVVINDSLMASVAQDAANISNVENYTFHSFSAFNTSGDFWEEMGKPPVGDFHFPEFPSLEGCIAAQFKGFRTAQYEFRKFNNGDIYNTSRVIEGPYVELLELFNGGKKVWALGPFNPLAVEKKDSIGFRHPCMEWLDKQEPSSVIYISFGTTTALRDEQIQQIATGLEQSKQKFIWVLREADKGDIFAGSEAKRYELPKGFEERVEGMGLVVRDWAPQLEILSHSSTGGFMSHCGWNSCLESITMGVPIATWPMHSDQPRNAVLVTEVLKVGLVVKDWAQRNSLVSASVVENGVRRLMETKEGDEMRQRAVRLKNAIHRSMDEGGVSHMEMGSFIAHISK.

The Proton acceptor role is filled by histidine 26. Residue histidine 26 coordinates an anthocyanidin. Catalysis depends on aspartate 125, which acts as the Charge relay. UDP-alpha-D-glucose-binding residues include serine 148, alanine 335, glutamine 337, histidine 352, tryptophan 355, asparagine 356, serine 357, glutamate 360, aspartate 376, and glutamine 377.

It belongs to the UDP-glycosyltransferase family.

It catalyses the reaction trans-zeatin + UDP-alpha-D-glucose = O-beta-D-glucosyl-trans-zeatin + UDP + H(+). May regulate active versus storage forms of cytokinins, and could have an impact on seed growth. Can also use UDP-xylose to catalyze the formation of O-xylosylzeatin but at much lower affinity. The polypeptide is Zeatin O-glucosyltransferase (Phaseolus lunatus (Lima bean)).